Reading from the N-terminus, the 366-residue chain is Galactoside alpha-(1,2)-fucosyltransferase 1 (366 aa).

Residues 1 to 8 (MWPRSHRH) lie on the Cytoplasmic side of the membrane. The chain crosses the membrane as a helical; Signal-anchor for type II membrane protein span at residues 9 to 25 (LCLAFLLVCVLSAISFL). Over 26 to 366 (IHFHQDSIRH…LSPLWPLAEP (341 aa)) the chain is Lumenal. 3 N-linked (GlcNAc...) asparagine glycosylation sites follow: Asn-66, Asn-302, and Asn-328.

Belongs to the glycosyltransferase 11 family.

The protein resides in the golgi apparatus. Its subcellular location is the golgi stack membrane. It carries out the reaction a beta-D-galactosyl-(1-&gt;4)-N-acetyl-beta-D-glucosaminyl derivative + GDP-beta-L-fucose = an alpha-L-Fuc-(1-&gt;2)-beta-D-Gal-(1-&gt;4)-beta-D-GlcNAc derivative + GDP + H(+). It catalyses the reaction a ganglioside GA1 + GDP-beta-L-fucose = a ganglioside Fuc-GA1 + GDP + H(+). The enzyme catalyses a beta-D-Gal-(1-&gt;3)-beta-D-GlcNAc-(1-&gt;3)-beta-D-Gal-(1-&gt;4)-beta-D-Glc-(1&lt;-&gt;1')-Cer(d18:1(4E)) + GDP-beta-L-fucose = alpha-L-fucosyl-(1-&gt;2)- beta-D-galactosyl-(1-&gt;3)-N-acetyl-beta-D-glucosaminyl-(1-&gt;3)-beta-D-galactosyl-(1-&gt;4)-beta-D-glucosyl-(1&lt;-&gt;1')-N-acylsphing-4-enine + GDP + H(+). The catalysed reaction is a neolactoside nLc4Cer(d18:1(4E)) + GDP-beta-L-fucose = a neolactoside IV(2)-alpha-Fuc-nLc4Cer(d18:1(4E)) + GDP + H(+). It carries out the reaction a ganglioside GM1 + GDP-beta-L-fucose = a ganglioside Fuc-GM1 + GDP + H(+). It catalyses the reaction beta-D-galactosyl-(1-&gt;3)-N-acetyl-D-galactosamine + GDP-beta-L-fucose = alpha-L-fucosyl-(1-&gt;2)-beta-D-galactosyl-(1-&gt;3)-N-acetyl-D-galactosamine + GDP + H(+). It functions in the pathway protein modification; protein glycosylation. In terms of biological role, catalyzes the transfer of L-fucose, from a guanosine diphosphate-beta-L-fucose, to the terminal galactose residue of glycoconjugates through an alpha(1,2) linkage leading to H antigen synthesis that is an intermediate substrate in the synthesis of ABO blood group antigens. H antigen is essential for maturation of the glomerular layer of the main olfactory bulb, in cell migration and early cell-cell contacts during tumor associated angiogenesis. Preferentially fucosylates soluble lactose and to a lesser extent fucosylates glycolipids gangliosides GA1 and GM1a. The sequence is that of Galactoside alpha-(1,2)-fucosyltransferase 1 from Saimiri sciureus (Common squirrel monkey).